The following is a 199-amino-acid chain: Dephospho-CoA kinase (199 aa).

In terms of domain architecture, DPCK spans 4–199 (VLGITGGIAT…KWLEEQIGKK (196 aa)). Residue 12-17 (ATGKST) participates in ATP binding.

This sequence belongs to the CoaE family.

Its subcellular location is the cytoplasm. It catalyses the reaction 3'-dephospho-CoA + ATP = ADP + CoA + H(+). It participates in cofactor biosynthesis; coenzyme A biosynthesis; CoA from (R)-pantothenate: step 5/5. Functionally, catalyzes the phosphorylation of the 3'-hydroxyl group of dephosphocoenzyme A to form coenzyme A. The polypeptide is Dephospho-CoA kinase (Enterococcus faecalis (strain ATCC 700802 / V583)).